Here is a 139-residue protein sequence, read N- to C-terminus: Small ribosomal subunit protein uS12 (139 aa).

Residues 1-44 (MPTINQLVRKPRQSKITKSKSPALNKGYNSFKKSLTDVKSPQKR) are disordered. A compositionally biased stretch (basic residues) spans 9–18 (RKPRQSKITK). Residues 19–39 (SKSPALNKGYNSFKKSLTDVK) are compositionally biased toward polar residues. 3-methylthioaspartic acid is present on aspartate 102.

The protein belongs to the universal ribosomal protein uS12 family. As to quaternary structure, part of the 30S ribosomal subunit. Contacts proteins S8 and S17. May interact with IF1 in the 30S initiation complex.

In terms of biological role, with S4 and S5 plays an important role in translational accuracy. Its function is as follows. Interacts with and stabilizes bases of the 16S rRNA that are involved in tRNA selection in the A site and with the mRNA backbone. Located at the interface of the 30S and 50S subunits, it traverses the body of the 30S subunit contacting proteins on the other side and probably holding the rRNA structure together. The combined cluster of proteins S8, S12 and S17 appears to hold together the shoulder and platform of the 30S subunit. This chain is Small ribosomal subunit protein uS12, found in Lysinibacillus sphaericus (strain C3-41).